Here is a 1392-residue protein sequence, read N- to C-terminus: DNA-directed RNA polymerase subunit beta' (1392 aa).

Cysteine 70, cysteine 72, cysteine 85, and cysteine 88 together coordinate Zn(2+). Mg(2+)-binding residues include aspartate 460, aspartate 462, and aspartate 464. Cysteine 810, cysteine 884, cysteine 891, and cysteine 894 together coordinate Zn(2+).

It belongs to the RNA polymerase beta' chain family. In terms of assembly, the RNAP catalytic core consists of 2 alpha, 1 beta, 1 beta' and 1 omega subunit. When a sigma factor is associated with the core the holoenzyme is formed, which can initiate transcription. It depends on Mg(2+) as a cofactor. Zn(2+) is required as a cofactor.

It carries out the reaction RNA(n) + a ribonucleoside 5'-triphosphate = RNA(n+1) + diphosphate. DNA-dependent RNA polymerase catalyzes the transcription of DNA into RNA using the four ribonucleoside triphosphates as substrates. The protein is DNA-directed RNA polymerase subunit beta' of Geobacter metallireducens (strain ATCC 53774 / DSM 7210 / GS-15).